We begin with the raw amino-acid sequence, 499 residues long: Glutamyl-tRNA(Gln) amidotransferase subunit A, mitochondrial (499 aa).

Catalysis depends on charge relay system residues Lys61 and Ser139. The active-site Acyl-ester intermediate is the Ser163.

This sequence belongs to the amidase family. GatA subfamily. Subunit of the heterotrimeric GatCAB amidotransferase (AdT) complex, composed of A, B and C subunits.

It is found in the mitochondrion. The enzyme catalyses L-glutamyl-tRNA(Gln) + L-glutamine + ATP + H2O = L-glutaminyl-tRNA(Gln) + L-glutamate + ADP + phosphate + H(+). In terms of biological role, allows the formation of correctly charged Gln-tRNA(Gln) through the transamidation of misacylated Glu-tRNA(Gln) in the mitochondria. The reaction takes place in the presence of glutamine and ATP through an activated gamma-phospho-Glu-tRNA(Gln). This chain is Glutamyl-tRNA(Gln) amidotransferase subunit A, mitochondrial, found in Coccidioides posadasii (strain C735) (Valley fever fungus).